Consider the following 474-residue polypeptide: MTTPQEVLKRIQDEKIELIDLKFIDTVGTWQHLTLYQNQIDESSFSDGVPFDGSSIRGWKAINESDMTMVLDPNTAWIDPFMEVPTLSIVCSIKEPRTGEWYNRCPRVIAQKAIDYLVSTGIGDTAFFGPEAEFFIFDSARFAQNANEGYYFLDSVEGAWNSGKEGTADKPNLAYKPRFKEGYFPVSPTDSFQDIRTEMLLTMAKLGVPIEKHHHEVATGGQCELGFRFGKLIEAADWLMIYKYVIKNVAKKYGKTVTFMPKPIFGDNGSGMHCHQSIWKDGKPLFAGDQYAGLSEMGLYYIGGLLKHAPALLAITNPSTNSYKRLVPGYEAPVNLAYSQGNRSASIRIPLSGTNPKAKRLEFRCPDATSNPYLAFAAMLCAGIDGIKNKIHPGEPLDKNIYELSPEELAKVPSTPGSLELALEALENDHAFLTDTGVFTEDFIQNWIDYKLANEVKQMQLRPHPYEFSIYYDV.

The GS beta-grasp domain maps to 14 to 99 (EKIELIDLKF…VCSIKEPRTG (86 aa)). Positions 106–474 (PRVIAQKAID…PYEFSIYYDV (369 aa)) constitute a GS catalytic domain. Mg(2+) is bound by residues Glu-131 and Glu-133. Glu-211 is a binding site for ATP. Mg(2+) is bound by residues Glu-216 and Glu-224. L-glutamate contacts are provided by residues 268 to 269 (NG) and Gly-269. His-273 contacts Mg(2+). Residues 275–277 (HQS) and Ser-277 contribute to the ATP site. Positions 325, 331, and 343 each coordinate L-glutamate. Residues Arg-343, Arg-348, and Lys-357 each coordinate ATP. A Mg(2+)-binding site is contributed by Glu-362. An L-glutamate-binding site is contributed by Arg-364. Tyr-402 carries the O-AMP-tyrosine modification.

This sequence belongs to the glutamine synthetase family. In terms of assembly, oligomer of 12 subunits arranged in the form of two hexagons. Requires Mg(2+) as cofactor.

The protein resides in the cytoplasm. The catalysed reaction is L-glutamate + NH4(+) + ATP = L-glutamine + ADP + phosphate + H(+). Its activity is regulated as follows. The activity of this enzyme could be controlled by adenylation under conditions of abundant glutamine. Its function is as follows. Involved in nitrogen metabolism via ammonium assimilation. Catalyzes the ATP-dependent biosynthesis of glutamine from glutamate and ammonia. The sequence is that of Glutamine synthetase from Nostoc sp. (strain PCC 7120 / SAG 25.82 / UTEX 2576).